A 449-amino-acid polypeptide reads, in one-letter code: Deoxyguanosinetriphosphate triphosphohydrolase-like protein (449 aa).

The segment at 1 to 27 (MTSSVWQERRHGEDKQRRNDHRSPYQR) is disordered. A compositionally biased stretch (basic and acidic residues) spans 7 to 27 (QERRHGEDKQRRNDHRSPYQR). Residues 59-255 (RLTHSLEVSQ…MELADDIAYA (197 aa)) form the HD domain.

It belongs to the dGTPase family. Type 2 subfamily.

This chain is Deoxyguanosinetriphosphate triphosphohydrolase-like protein, found in Shewanella baltica (strain OS185).